The following is a 146-amino-acid chain: Large ribosomal subunit protein uL15 (146 aa).

Residues methionine 1–proline 65 form a disordered region. Residues arginine 24–alanine 34 show a composition bias toward gly residues.

This sequence belongs to the universal ribosomal protein uL15 family. In terms of assembly, part of the 50S ribosomal subunit.

Binds to the 23S rRNA. This Bordetella petrii (strain ATCC BAA-461 / DSM 12804 / CCUG 43448) protein is Large ribosomal subunit protein uL15.